A 113-amino-acid polypeptide reads, in one-letter code: Large ribosomal subunit protein bL19 (113 aa).

Belongs to the bacterial ribosomal protein bL19 family.

Its function is as follows. This protein is located at the 30S-50S ribosomal subunit interface and may play a role in the structure and function of the aminoacyl-tRNA binding site. The protein is Large ribosomal subunit protein bL19 of Moorella thermoacetica (strain ATCC 39073 / JCM 9320).